The chain runs to 264 residues: Thymidylate synthase (264 aa).

Residue Arg-21 participates in dUMP binding. Position 51 (His-51) interacts with (6R)-5,10-methylene-5,6,7,8-tetrahydrofolate. A dUMP-binding site is contributed by 126 to 127 (RR). Residue Cys-146 is the Nucleophile of the active site. DUMP contacts are provided by residues 166–169 (RSAD), Asn-177, and 207–209 (HLY). Asp-169 is a binding site for (6R)-5,10-methylene-5,6,7,8-tetrahydrofolate. Ala-263 is a (6R)-5,10-methylene-5,6,7,8-tetrahydrofolate binding site.

It belongs to the thymidylate synthase family. Bacterial-type ThyA subfamily. Homodimer.

The protein resides in the cytoplasm. It catalyses the reaction dUMP + (6R)-5,10-methylene-5,6,7,8-tetrahydrofolate = 7,8-dihydrofolate + dTMP. It functions in the pathway pyrimidine metabolism; dTTP biosynthesis. Catalyzes the reductive methylation of 2'-deoxyuridine-5'-monophosphate (dUMP) to 2'-deoxythymidine-5'-monophosphate (dTMP) while utilizing 5,10-methylenetetrahydrofolate (mTHF) as the methyl donor and reductant in the reaction, yielding dihydrofolate (DHF) as a by-product. This enzymatic reaction provides an intracellular de novo source of dTMP, an essential precursor for DNA biosynthesis. This is Thymidylate synthase from Chelativorans sp. (strain BNC1).